The chain runs to 269 residues: Glutamate racemase (269 aa).

Substrate is bound by residues 13-14 (DS) and 45-46 (YS). Residue Cys-77 is the Proton donor/acceptor of the active site. Residue 78 to 79 (NT) participates in substrate binding. The active-site Proton donor/acceptor is the Cys-188. 189–190 (TH) is a substrate binding site.

This sequence belongs to the aspartate/glutamate racemases family.

The catalysed reaction is L-glutamate = D-glutamate. It participates in cell wall biogenesis; peptidoglycan biosynthesis. Its function is as follows. Provides the (R)-glutamate required for cell wall biosynthesis. This is Glutamate racemase from Pasteurella multocida (strain Pm70).